The sequence spans 479 residues: Ribulose bisphosphate carboxylase large chain (479 aa).

The propeptide occupies Met1–Ser2. Substrate contacts are provided by Asn123 and Thr173. Residue Lys175 is the Proton acceptor of the active site. Lys177 lines the substrate pocket. Mg(2+) contacts are provided by Lys201, Asp203, and Glu204. The residue at position 201 (Lys201) is an N6-carboxylysine. A Phosphoserine modification is found at Ser208. His294 acts as the Proton acceptor in catalysis. The substrate site is built by Arg295 and His327. Residue Thr330 is modified to Phosphothreonine. Ser379 contacts substrate.

This sequence belongs to the RuBisCO large chain family. Type I subfamily. Heterohexadecamer of 8 large chains and 8 small chains; disulfide-linked. The disulfide link is formed within the large subunit homodimers. Mg(2+) is required as a cofactor. The disulfide bond which can form in the large chain dimeric partners within the hexadecamer appears to be associated with oxidative stress and protein turnover.

The protein localises to the plastid. The protein resides in the chloroplast. The catalysed reaction is 2 (2R)-3-phosphoglycerate + 2 H(+) = D-ribulose 1,5-bisphosphate + CO2 + H2O. The enzyme catalyses D-ribulose 1,5-bisphosphate + O2 = 2-phosphoglycolate + (2R)-3-phosphoglycerate + 2 H(+). RuBisCO catalyzes two reactions: the carboxylation of D-ribulose 1,5-bisphosphate, the primary event in carbon dioxide fixation, as well as the oxidative fragmentation of the pentose substrate in the photorespiration process. Both reactions occur simultaneously and in competition at the same active site. This is Ribulose bisphosphate carboxylase large chain from Brassica oleracea (Wild cabbage).